A 364-amino-acid chain; its full sequence is 4-hydroxy-3-methylbut-2-en-1-yl diphosphate synthase (flavodoxin) (364 aa).

[4Fe-4S] cluster contacts are provided by C268, C271, C303, and E310.

Belongs to the IspG family. Requires [4Fe-4S] cluster as cofactor.

The enzyme catalyses (2E)-4-hydroxy-3-methylbut-2-enyl diphosphate + oxidized [flavodoxin] + H2O + 2 H(+) = 2-C-methyl-D-erythritol 2,4-cyclic diphosphate + reduced [flavodoxin]. It functions in the pathway isoprenoid biosynthesis; isopentenyl diphosphate biosynthesis via DXP pathway; isopentenyl diphosphate from 1-deoxy-D-xylulose 5-phosphate: step 5/6. Functionally, converts 2C-methyl-D-erythritol 2,4-cyclodiphosphate (ME-2,4cPP) into 1-hydroxy-2-methyl-2-(E)-butenyl 4-diphosphate. This is 4-hydroxy-3-methylbut-2-en-1-yl diphosphate synthase (flavodoxin) from Desulfotalea psychrophila (strain LSv54 / DSM 12343).